The primary structure comprises 422 residues: Enolase (422 aa).

Gln162 provides a ligand contact to (2R)-2-phosphoglycerate. Glu204 (proton donor) is an active-site residue. Mg(2+) is bound by residues Asp241, Glu284, and Asp311. (2R)-2-phosphoglycerate is bound by residues Lys336, Arg365, Ser366, and Lys387. Catalysis depends on Lys336, which acts as the Proton acceptor.

The protein belongs to the enolase family. As to quaternary structure, component of the RNA degradosome, a multiprotein complex involved in RNA processing and mRNA degradation. Requires Mg(2+) as cofactor.

The protein resides in the cytoplasm. It is found in the secreted. Its subcellular location is the cell surface. The catalysed reaction is (2R)-2-phosphoglycerate = phosphoenolpyruvate + H2O. It functions in the pathway carbohydrate degradation; glycolysis; pyruvate from D-glyceraldehyde 3-phosphate: step 4/5. In terms of biological role, catalyzes the reversible conversion of 2-phosphoglycerate (2-PG) into phosphoenolpyruvate (PEP). It is essential for the degradation of carbohydrates via glycolysis. This is Enolase from Legionella pneumophila (strain Paris).